Reading from the N-terminus, the 387-residue chain is 3-ketoacyl-CoA thiolase (387 aa).

Cys-91 (acyl-thioester intermediate) is an active-site residue. Residues His-343 and Cys-373 each act as proton acceptor in the active site.

The protein belongs to the thiolase-like superfamily. Thiolase family. Heterotetramer of two alpha chains (FadB) and two beta chains (FadA).

The protein resides in the cytoplasm. The catalysed reaction is an acyl-CoA + acetyl-CoA = a 3-oxoacyl-CoA + CoA. It participates in lipid metabolism; fatty acid beta-oxidation. Catalyzes the final step of fatty acid oxidation in which acetyl-CoA is released and the CoA ester of a fatty acid two carbons shorter is formed. The protein is 3-ketoacyl-CoA thiolase of Shewanella loihica (strain ATCC BAA-1088 / PV-4).